A 189-amino-acid polypeptide reads, in one-letter code: Probable nicotinate-nucleotide adenylyltransferase (189 aa).

It belongs to the NadD family.

The catalysed reaction is nicotinate beta-D-ribonucleotide + ATP + H(+) = deamido-NAD(+) + diphosphate. The protein operates within cofactor biosynthesis; NAD(+) biosynthesis; deamido-NAD(+) from nicotinate D-ribonucleotide: step 1/1. Functionally, catalyzes the reversible adenylation of nicotinate mononucleotide (NaMN) to nicotinic acid adenine dinucleotide (NaAD). This Exiguobacterium sibiricum (strain DSM 17290 / CCUG 55495 / CIP 109462 / JCM 13490 / 255-15) protein is Probable nicotinate-nucleotide adenylyltransferase.